A 2530-amino-acid polypeptide reads, in one-letter code: Cullin-9 (2530 aa).

Residue lysine 87 forms a Glycyl lysine isopeptide (Lys-Gly) (interchain with G-Cter in ubiquitin) linkage. The region spanning 367 to 440 (RSEFSSRSGY…HWHMLEILGP (74 aa)) is the CPH domain. 2 disordered regions span residues 585–639 (LPSS…KAQS) and 930–951 (RGSPERAVLETPSTQGQDGSPE). Over residues 940 to 949 (TPSTQGQDGS) the composition is skewed to polar residues. Serine 978 is modified (phosphoserine). Residues 1145–1324 (PITIPFFDVF…RTCLFYTIRA (180 aa)) enclose the DOC domain. Position 1365-1372 (1365-1372 (AAQALGKT)) interacts with ATP. Disordered regions lie at residues 1435 to 1468 (EAPPGPSPEPSSQPLSKNSKGQDGSPTPAPTPVC) and 1667 to 1690 (GDQEEWRPEKVEEDDEGQETGREL). The residue at position 1459 (serine 1459) is a Phosphoserine. Lysine 1884 participates in a covalent cross-link: Glycyl lysine isopeptide (Lys-Gly) (interchain with G-Cter in NEDD8). Residues 2070-2287 (RPDQCPVCVT…KDYYNCSAMV (218 aa)) form a TRIAD supradomain region. Zn(2+) contacts are provided by cysteine 2074, cysteine 2077, cysteine 2092, histidine 2094, cysteine 2097, cysteine 2100, cysteine 2119, cysteine 2124, cysteine 2164, cysteine 2170, cysteine 2185, cysteine 2188, cysteine 2193, cysteine 2196, histidine 2202, cysteine 2207, cysteine 2240, and cysteine 2243. The RING-type 1 zinc finger occupies 2074 to 2124 (CPVCVTPLGPHDDSPSLCCLHCCCKSCWNEYLTTRIEQNFVLNCTCPIADC). The IBR-type zinc finger occupies 2144–2207 (SKYEKALLRG…FPEAHYPASC (64 aa)). An RING-type 2; atypical zinc finger spans residues 2240–2269 (CPSCQAPIEKNEGCLHMTCARCNHGFCWRC). Cysteine 2253 is a catalytic residue. 6 residues coordinate Zn(2+): cysteine 2258, cysteine 2261, cysteine 2266, cysteine 2269, histidine 2277, and cysteine 2283. Phosphoserine is present on serine 2440. Residues 2443-2530 (VETREVKGSN…DEDEDDESYD (88 aa)) form a disordered region. The span at 2452–2462 (NVPSDQPQGSS) shows a compositional bias: polar residues. A coiled-coil region spans residues 2459 to 2500 (QGSSGLEVEDEEEEEEEEEEEEEEEEEDVPEWQHEFDEELDN). Composition is skewed to acidic residues over residues 2465 to 2510 (EVED…EESE) and 2520 to 2530 (GDEDEDDESYD).

The protein belongs to the cullin family. Component of a Cul9-RING complex consisting of CUL9 and RBX1; the CUL9-RBX1 complex is a heterododecamer composed of six CUL9 and six RBX1 protomers. Interacts (via C-terminal TRIAD/RBR supradomain) with E2 ubiquitin-conjugating enzyme UBE2L3. Interacts with CUL7; the interaction with the CUL7 component of the 3M complex leads to inhibition of CUL9 activity. The CUL7-CUL9 heterodimer seems to interact specifically with TP53, likely via the CPH domain. Forms a complex with p53/TP53 in the cytoplasm of unstressed cells. Interacts with UBCH7 and UBCH8. Post-translationally, autoubiquitinated by the CUL9-RBX1 complex at Lys-87. Neddylated. Neddylation is mediated by E1 enzyme UBA3-NAE1 complex and E2 enzyme UBE2F. Structural rearrangment of the C-terminal TRIAD/RBR supradomain may play a role in neddylation and deneddylation.

Its subcellular location is the cytoplasm. Functionally, core component of the Cul9-RING ubiquitin-protein ligase complex composed of CUL9 and RBX1. The CUL9-RBX1 complex mediates ubiquitination and subsequent degradation of BIRC5 and is required to maintain microtubule dynamics and genome integrity. Acts downstream of the 3M complex, which inhibits CUL9 activity and the ubiquitination of BIRC5. The CUL9-RBX1 complex also mediates mono-ubiquitination of p53/TP53. Acts as a cytoplasmic anchor protein in p53/TP53-associated protein complex. Regulates the subcellular localization of p53/TP53 and its subsequent function. Ubiquitinates apurinic/apyrimidinic endodeoxyribonuclease APEX2. Ubiquitination by the CUL9-RBX1 complex is predominantly mediated by E2 ubiquitin-conjugating enzymes UBE2L3 and UBE2D2. The polypeptide is Cullin-9 (Cul9) (Mus musculus (Mouse)).